Consider the following 728-residue polypeptide: FAS1 domain-containing protein fsc1 (728 aa).

Positions 1–21 are cleaved as a signal peptide; that stretch reads MNLQFRLYLLFILLFISFANG. Residues 22–670 are Vacuolar-facing; that stretch reads KNEYEDKSTS…TKRQNRWRIT (649 aa). FAS1 domains lie at 29–151 and 154–285; these read STSI…DNII and PPPA…SSLI. Residue Asn-89 is glycosylated (N-linked (GlcNAc...) asparagine). N-linked (GlcNAc...) asparagine glycosylation is found at Asn-404 and Asn-501. The helical transmembrane segment at 671-691 threads the bilayer; sequence FISISGLLLSVGICVLCYKIY. Residues 692 to 728 are Cytoplasmic-facing; sequence FKFFRNRFMNQGEREPLLAPADSDTMAGRRNSSSLSV.

The protein localises to the vacuole membrane. Its function is as follows. Required for the fusion of autophagosomes with the vacuole. This is FAS1 domain-containing protein fsc1 (fsc1) from Schizosaccharomyces pombe (strain 972 / ATCC 24843) (Fission yeast).